We begin with the raw amino-acid sequence, 373 residues long: 4-hydroxy-3-methylbut-2-en-1-yl diphosphate synthase (flavodoxin) (373 aa).

The [4Fe-4S] cluster site is built by Cys-270, Cys-273, Cys-305, and Glu-312.

This sequence belongs to the IspG family. It depends on [4Fe-4S] cluster as a cofactor.

It catalyses the reaction (2E)-4-hydroxy-3-methylbut-2-enyl diphosphate + oxidized [flavodoxin] + H2O + 2 H(+) = 2-C-methyl-D-erythritol 2,4-cyclic diphosphate + reduced [flavodoxin]. Its pathway is isoprenoid biosynthesis; isopentenyl diphosphate biosynthesis via DXP pathway; isopentenyl diphosphate from 1-deoxy-D-xylulose 5-phosphate: step 5/6. Its function is as follows. Converts 2C-methyl-D-erythritol 2,4-cyclodiphosphate (ME-2,4cPP) into 1-hydroxy-2-methyl-2-(E)-butenyl 4-diphosphate. This chain is 4-hydroxy-3-methylbut-2-en-1-yl diphosphate synthase (flavodoxin), found in Klebsiella pneumoniae subsp. pneumoniae (strain ATCC 700721 / MGH 78578).